Consider the following 153-residue polypeptide: Ribosome maturation factor RimP (153 aa).

The protein belongs to the RimP family.

It is found in the cytoplasm. Its function is as follows. Required for maturation of 30S ribosomal subunits. This is Ribosome maturation factor RimP from Actinobacillus pleuropneumoniae serotype 5b (strain L20).